Consider the following 450-residue polypeptide: Probable 1,4-beta-D-glucan cellobiohydrolase C (450 aa).

The N-terminal stretch at methionine 1–alanine 19 is a signal peptide. Positions glutamine 20 to isoleucine 55 constitute a CBM1 domain. Cystine bridges form between cysteine 27–cysteine 44 and cysteine 38–cysteine 54. Residues threonine 59 to threonine 90 are thr-rich linker. Residues threonine 63–valine 89 are disordered. The segment at alanine 91–phenylalanine 450 is catalytic. Residue aspartate 180 is part of the active site. Disulfide bonds link cysteine 181-cysteine 240 and cysteine 372-cysteine 419. Residue aspartate 226 is the Proton donor of the active site. Aspartate 405 acts as the Nucleophile in catalysis. Asparagine 409 is a glycosylation site (N-linked (GlcNAc...) asparagine).

This sequence belongs to the glycosyl hydrolase 6 (cellulase B) family.

It is found in the secreted. It catalyses the reaction Hydrolysis of (1-&gt;4)-beta-D-glucosidic linkages in cellulose and cellotetraose, releasing cellobiose from the non-reducing ends of the chains.. Its function is as follows. The biological conversion of cellulose to glucose generally requires three types of hydrolytic enzymes: (1) Endoglucanases which cut internal beta-1,4-glucosidic bonds; (2) Exocellobiohydrolases that cut the disaccharide cellobiose from the non-reducing end of the cellulose polymer chain; (3) Beta-1,4-glucosidases which hydrolyze the cellobiose and other short cello-oligosaccharides to glucose. This chain is Probable 1,4-beta-D-glucan cellobiohydrolase C (cbhC), found in Neosartorya fischeri (strain ATCC 1020 / DSM 3700 / CBS 544.65 / FGSC A1164 / JCM 1740 / NRRL 181 / WB 181) (Aspergillus fischerianus).